The following is a 442-amino-acid chain: Tryptophan synthase beta chain 2 (442 aa).

K122 bears the N6-(pyridoxal phosphate)lysine mark.

It belongs to the TrpB family. Tetramer of two alpha and two beta chains. Pyridoxal 5'-phosphate is required as a cofactor.

The enzyme catalyses (1S,2R)-1-C-(indol-3-yl)glycerol 3-phosphate + L-serine = D-glyceraldehyde 3-phosphate + L-tryptophan + H2O. It participates in amino-acid biosynthesis; L-tryptophan biosynthesis; L-tryptophan from chorismate: step 5/5. Its function is as follows. The beta subunit is responsible for the synthesis of L-tryptophan from indole and L-serine. The polypeptide is Tryptophan synthase beta chain 2 (trpB2) (Methanosarcina mazei (strain ATCC BAA-159 / DSM 3647 / Goe1 / Go1 / JCM 11833 / OCM 88) (Methanosarcina frisia)).